We begin with the raw amino-acid sequence, 215 residues long: Pyrrolidone-carboxylate peptidase (215 aa).

Residues Glu-80, Cys-143, and His-167 contribute to the active site.

The protein belongs to the peptidase C15 family. In terms of assembly, homotetramer.

It is found in the cytoplasm. The catalysed reaction is Release of an N-terminal pyroglutamyl group from a polypeptide, the second amino acid generally not being Pro.. Removes 5-oxoproline from various penultimate amino acid residues except L-proline. The sequence is that of Pyrrolidone-carboxylate peptidase from Bacillus cereus (strain ZK / E33L).